The sequence spans 553 residues: Probable malate:quinone oxidoreductase (553 aa).

Over residues 534 to 543 (QLKPQVQPQP) the composition is skewed to low complexity. The segment at 534 to 553 (QLKPQVQPQPAHKAVADIAL) is disordered.

The protein belongs to the MQO family. FAD serves as cofactor.

It catalyses the reaction (S)-malate + a quinone = a quinol + oxaloacetate. Its pathway is carbohydrate metabolism; tricarboxylic acid cycle; oxaloacetate from (S)-malate (quinone route): step 1/1. In Citrobacter koseri (strain ATCC BAA-895 / CDC 4225-83 / SGSC4696), this protein is Probable malate:quinone oxidoreductase.